A 279-amino-acid polypeptide reads, in one-letter code: Pantothenate synthetase (279 aa).

Position 26–33 (26–33) interacts with ATP; the sequence is MGNLHEGH. His-33 serves as the catalytic Proton donor. Residue Gln-57 coordinates (R)-pantoate. Beta-alanine is bound at residue Gln-57. An ATP-binding site is contributed by 144–147; it reads GKKD. Gln-150 serves as a coordination point for (R)-pantoate. Residues Val-173 and 181–184 contribute to the ATP site; that span reads LSSR.

It belongs to the pantothenate synthetase family. In terms of assembly, homodimer.

The protein resides in the cytoplasm. The enzyme catalyses (R)-pantoate + beta-alanine + ATP = (R)-pantothenate + AMP + diphosphate + H(+). Its pathway is cofactor biosynthesis; (R)-pantothenate biosynthesis; (R)-pantothenate from (R)-pantoate and beta-alanine: step 1/1. Catalyzes the condensation of pantoate with beta-alanine in an ATP-dependent reaction via a pantoyl-adenylate intermediate. The protein is Pantothenate synthetase of Burkholderia thailandensis (strain ATCC 700388 / DSM 13276 / CCUG 48851 / CIP 106301 / E264).